The sequence spans 1957 residues: Chromatin modification-related protein EAF1 A (1957 aa).

Disordered stretches follow at residues 108–208, 261–287, 323–373, and 449–469; these read ASPH…TDLV, NRVSSNSLNTKVDGEPVVRESTAGSKT, GGSP…SHAN, and NQSHRSTAEMQTKEKSSETEK. Residues 140 to 151 are compositionally biased toward basic and acidic residues; it reads SENKSVEGERNL. Composition is skewed to polar residues over residues 261 to 270, 333 to 342, and 355 to 372; these read NRVSSNSLNT, GQKNSSTQLN, and TNRGATGTNGLESESSHA. In terms of domain architecture, HSA spans 563 to 641; the sequence is CGTAPVEVRE…LSNAILQFWS (79 aa). 2 disordered regions span residues 833–909 and 928–950; these read GSNS…AVQK and AETSGRPKKKKKTHQGSAYDQTW. The segment covering 884-898 has biased composition (polar residues); that stretch reads TDASSGDTSSFQDEY. The 57-residue stretch at 1049–1105 folds into the SANT domain; the sequence is SGNPWSLFEDQALVVLVHDMGPNWELISDAMNSTLKIKCIYRNPTECKDRHKILMDK. 7 disordered regions span residues 1107-1131, 1282-1314, 1344-1367, 1449-1644, 1687-1768, 1804-1840, and 1876-1957; these read AGDGADSAEDSGNSQSYPSTLPGIP, TPVLPTSGAHPSTPGSSGVVLSNNLPTTSGLQS, LSGRNLQQPSLSTPAAVSGSDRGH, QGNS…QQLN, PVRP…IAPA, ELSKKSQAERMPRVPQSVTNTTQTVSMGTTKGMPQAS, and SSNT…TKVE. Polar residues-rich tracts occupy residues 1116–1125, 1290–1314, 1344–1358, 1459–1472, 1479–1492, and 1501–1510; these read DSGNSQSYPS, AHPSTPGSSGVVLSNNLPTTSGLQS, LSGRNLQQPSLSTPA, SNLSSGFTNQTTPV, LSQQHQMSPQSHVL, and QSPSQATGAQ. 2 stretches are compositionally biased toward low complexity: residues 1523–1534 and 1545–1562; these read QRYLQQQQQQQQ and VQQPQGSSVSSSPQNSPQ. Residues 1563–1579 are compositionally biased toward pro residues; it reads TQPPVSPQPLSMPPVSP. Polar residues-rich tracts occupy residues 1582 to 1595, 1604 to 1618, 1635 to 1644, 1691 to 1722, and 1734 to 1758; these read NINAMAQQKPQKSQ, SPQSGTSGVNNQAGK, RQPTQGQQLN, DQQSSVGTTTSTNLQSKPFVSPLSSNHSQQLP, and QQQMQLHSDNSIQGQSSPATPCNIL. The span at 1759-1768 shows a compositional bias: low complexity; that stretch reads STSSPSIAPA. Positions 1805 to 1815 are enriched in basic and acidic residues; it reads LSKKSQAERMP. Composition is skewed to polar residues over residues 1819–1832 and 1876–1894; these read QSVTNTTQTVSMGT and SSNTDSAGNDPVSTPNQGL. Composition is skewed to basic and acidic residues over residues 1913 to 1922 and 1932 to 1942; these read SEEKRPKLPE and LASEEQPHLEE.

This sequence belongs to the EAF1 family. As to quaternary structure, component of the NuA4 histone acetyltransferase complex. Interacts with ARP4 and SWC4, and (via HSA domain) with TAF14 and TAF14B. As to expression, expressed in leaves.

The protein localises to the nucleus. Its function is as follows. Component of the NuA4 histone acetyltransferase complex which is involved in transcriptional activation of selected genes principally by acetylation of nucleosomal histone H4 and H2A. In Arabidopsis thaliana (Mouse-ear cress), this protein is Chromatin modification-related protein EAF1 A (EAF1A).